The primary structure comprises 458 residues: Tol-Pal system protein TolB (458 aa).

An N-terminal signal peptide occupies residues 1–23 (MSSVIRKWALTALMAVSSTALFA).

It belongs to the TolB family. As to quaternary structure, the Tol-Pal system is composed of five core proteins: the inner membrane proteins TolA, TolQ and TolR, the periplasmic protein TolB and the outer membrane protein Pal. They form a network linking the inner and outer membranes and the peptidoglycan layer.

It localises to the periplasm. Part of the Tol-Pal system, which plays a role in outer membrane invagination during cell division and is important for maintaining outer membrane integrity. The polypeptide is Tol-Pal system protein TolB (Zymomonas mobilis subsp. mobilis (strain ATCC 31821 / ZM4 / CP4)).